Reading from the N-terminus, the 72-residue chain is Neuropeptide SIFamide (72 aa).

A signal peptide spans 1 to 26; that stretch reads MALRFTLTLLLVTILVAAILLGSSEA. Asparagine 34 carries N-linked (GlcNAc...) asparagine glycosylation. Phenylalanine 38 carries the phenylalanine amide modification. Residues 42–72 constitute a propeptide that is removed on maturation; it reads NSLDYDSAKMSAVCEVAMEACPMWFPQNDSK.

Belongs to the FARP (FMRFamide related peptide) family. Strongly expressed in two pairs of neurons in the pars intercerebralis (at protein level).

It localises to the secreted. Its function is as follows. Ligand for the neuropeptide SIFamide receptor. Modulates sexual behavior by negatively regulating female receptivity to male courtship and by playing a role in male sex discrimination. Also involved in promoting sleep. This chain is Neuropeptide SIFamide, found in Drosophila melanogaster (Fruit fly).